The chain runs to 147 residues: Prefoldin subunit alpha (147 aa).

Belongs to the prefoldin subunit alpha family. In terms of assembly, heterohexamer of two alpha and four beta subunits.

Its subcellular location is the cytoplasm. Molecular chaperone capable of stabilizing a range of proteins. Seems to fulfill an ATP-independent, HSP70-like function in archaeal de novo protein folding. The chain is Prefoldin subunit alpha (pfdA) from Saccharolobus solfataricus (strain ATCC 35092 / DSM 1617 / JCM 11322 / P2) (Sulfolobus solfataricus).